The primary structure comprises 326 residues: N-acetyl-gamma-glutamyl-phosphate reductase (326 aa).

Cys155 is an active-site residue.

This sequence belongs to the NAGSA dehydrogenase family. Type 1 subfamily.

The protein resides in the cytoplasm. The catalysed reaction is N-acetyl-L-glutamate 5-semialdehyde + phosphate + NADP(+) = N-acetyl-L-glutamyl 5-phosphate + NADPH + H(+). It participates in amino-acid biosynthesis; L-arginine biosynthesis; N(2)-acetyl-L-ornithine from L-glutamate: step 3/4. Functionally, catalyzes the NADPH-dependent reduction of N-acetyl-5-glutamyl phosphate to yield N-acetyl-L-glutamate 5-semialdehyde. The polypeptide is N-acetyl-gamma-glutamyl-phosphate reductase (Shewanella baltica (strain OS185)).